Reading from the N-terminus, the 937-residue chain is Isoleucine--tRNA ligase (937 aa).

The short motif at 58–68 (PYANGSIHIGH) is the 'HIGH' region element. Glu-561 provides a ligand contact to L-isoleucyl-5'-AMP. The short motif at 602-606 (KMSKS) is the 'KMSKS' region element. ATP is bound at residue Lys-605. Residues Cys-900, Cys-903, Cys-920, and Cys-923 each coordinate Zn(2+).

The protein belongs to the class-I aminoacyl-tRNA synthetase family. IleS type 1 subfamily. Monomer. It depends on Zn(2+) as a cofactor.

Its subcellular location is the cytoplasm. It catalyses the reaction tRNA(Ile) + L-isoleucine + ATP = L-isoleucyl-tRNA(Ile) + AMP + diphosphate. Functionally, catalyzes the attachment of isoleucine to tRNA(Ile). As IleRS can inadvertently accommodate and process structurally similar amino acids such as valine, to avoid such errors it has two additional distinct tRNA(Ile)-dependent editing activities. One activity is designated as 'pretransfer' editing and involves the hydrolysis of activated Val-AMP. The other activity is designated 'posttransfer' editing and involves deacylation of mischarged Val-tRNA(Ile). The protein is Isoleucine--tRNA ligase of Pectobacterium atrosepticum (strain SCRI 1043 / ATCC BAA-672) (Erwinia carotovora subsp. atroseptica).